We begin with the raw amino-acid sequence, 327 residues long: Porphobilinogen deaminase (327 aa).

Cys-251 carries the S-(dipyrrolylmethanemethyl)cysteine modification.

The protein belongs to the HMBS family. Requires dipyrromethane as cofactor.

It catalyses the reaction 4 porphobilinogen + H2O = hydroxymethylbilane + 4 NH4(+). Its pathway is porphyrin-containing compound metabolism; protoporphyrin-IX biosynthesis; coproporphyrinogen-III from 5-aminolevulinate: step 2/4. Tetrapolymerization of the monopyrrole PBG into the hydroxymethylbilane pre-uroporphyrinogen in several discrete steps. This chain is Porphobilinogen deaminase (HEM3), found in Kluyveromyces lactis (strain ATCC 8585 / CBS 2359 / DSM 70799 / NBRC 1267 / NRRL Y-1140 / WM37) (Yeast).